The sequence spans 407 residues: Multidrug resistance protein MdtH (407 aa).

10 helical membrane-spanning segments follow: residues 13 to 33 (CFLI…FPLI), 88 to 108 (LGFI…SCML), 139 to 159 (VLML…TWLL), 163 to 183 (FKLV…FNAW), 210 to 230 (FVIY…VMLM), 247 to 267 (WMYI…TWWS), 277 to 297 (LMVG…VKNL), 298 to 318 (HTLL…EPAR), 340 to 360 (LSLA…YDIG), and 368 to 388 (LPWI…YCQF).

The protein belongs to the major facilitator superfamily. DHA1 family. MdtH (TC 2.A.1.2.21) subfamily.

The protein resides in the cell inner membrane. The protein is Multidrug resistance protein MdtH of Blochmanniella pennsylvanica (strain BPEN).